The primary structure comprises 188 residues: Protein K (188 aa).

The polypeptide is Protein K (K) (Escherichia coli).